A 556-amino-acid chain; its full sequence is Membrane protein insertase YidC (556 aa).

Residues 7-27 (ILLVALAVVAYLMVLQWNQDY) form a helical membrane-spanning segment. 2 disordered regions span residues 35–59 (ETAQSQPAAPALPDSPSATTEGNAN) and 126–152 (SSERTYEAQSGLIGDGPDKASGRPQYS). The segment covering 36 to 54 (TAQSQPAAPALPDSPSATT) has biased composition (low complexity). Helical transmembrane passes span 365–385 (LLGNWGWSIIVLTIVIKLAFF), 435–455 (LGGCLPILVQMPVFLALYWVL), 468–488 (FWITDLSIKDPYFILPIIMGV), and 513–533 (PIIFTFFFLWFPAGLVLYWVV).

Belongs to the OXA1/ALB3/YidC family. Type 1 subfamily. As to quaternary structure, interacts with the Sec translocase complex via SecD. Specifically interacts with transmembrane segments of nascent integral membrane proteins during membrane integration.

It localises to the cell inner membrane. Functionally, required for the insertion and/or proper folding and/or complex formation of integral membrane proteins into the membrane. Involved in integration of membrane proteins that insert both dependently and independently of the Sec translocase complex, as well as at least some lipoproteins. Aids folding of multispanning membrane proteins. This is Membrane protein insertase YidC from Stutzerimonas stutzeri (strain A1501) (Pseudomonas stutzeri).